A 597-amino-acid polypeptide reads, in one-letter code: Elongation factor 4 (597 aa).

Residues S4–I181 enclose the tr-type G domain. Residues D16–T21 and N128–D131 each bind GTP.

The protein belongs to the TRAFAC class translation factor GTPase superfamily. Classic translation factor GTPase family. LepA subfamily.

It is found in the cell membrane. It catalyses the reaction GTP + H2O = GDP + phosphate + H(+). Functionally, required for accurate and efficient protein synthesis under certain stress conditions. May act as a fidelity factor of the translation reaction, by catalyzing a one-codon backward translocation of tRNAs on improperly translocated ribosomes. Back-translocation proceeds from a post-translocation (POST) complex to a pre-translocation (PRE) complex, thus giving elongation factor G a second chance to translocate the tRNAs correctly. Binds to ribosomes in a GTP-dependent manner. The protein is Elongation factor 4 of Mycoplasmopsis pulmonis (strain UAB CTIP) (Mycoplasma pulmonis).